Consider the following 279-residue polypeptide: 2-dehydro-3-deoxyphosphooctonate aldolase (279 aa).

The protein belongs to the KdsA family.

It is found in the cytoplasm. The catalysed reaction is D-arabinose 5-phosphate + phosphoenolpyruvate + H2O = 3-deoxy-alpha-D-manno-2-octulosonate-8-phosphate + phosphate. Its pathway is carbohydrate biosynthesis; 3-deoxy-D-manno-octulosonate biosynthesis; 3-deoxy-D-manno-octulosonate from D-ribulose 5-phosphate: step 2/3. It functions in the pathway bacterial outer membrane biogenesis; lipopolysaccharide biosynthesis. This is 2-dehydro-3-deoxyphosphooctonate aldolase from Desulfosudis oleivorans (strain DSM 6200 / JCM 39069 / Hxd3) (Desulfococcus oleovorans).